The following is a 229-amino-acid chain: MQDEDGYITLNIKTRKPALISVGSASSSWWRVMALILLILCVGMVVGLVALGIWSVMQRNYLQGENENRTGTLQQLAKRFCQYVVKQSELKGTFKGHKCSPCDTNWRYYGDSCYGFFRHNLTWEESKQYCTDMNATLLKIDNRNIVEYIKARTHLIRWVGLSRQKSNEVWKWEDGSVISENMFEFLEDGKGNMNCAYFHNGKMHPTFCENKHYLMCERKAGMTKVDQLP.

Residues 1–33 (MQDEDGYITLNIKTRKPALISVGSASSSWWRVM) lie on the Cytoplasmic side of the membrane. Tyrosine 7 is subject to Phosphotyrosine. An ITAM motif is present at residues 7–10 (YITL). A helical; Signal-anchor for type II membrane protein membrane pass occupies residues 34–54 (ALILLILCVGMVVGLVALGIW). Residues 55 to 229 (SVMQRNYLQG…AGMTKVDQLP (175 aa)) lie on the Extracellular side of the membrane. An N-linked (GlcNAc...) asparagine glycan is attached at asparagine 68. Cysteine 102 and cysteine 113 are joined by a disulfide. The C-type lectin domain occupies 109 to 217 (YGDSCYGFFR…CENKHYLMCE (109 aa)). N-linked (GlcNAc...) asparagine glycans are attached at residues asparagine 120 and asparagine 134. Disulfide bonds link cysteine 130–cysteine 216 and cysteine 195–cysteine 208.

As to quaternary structure, homodimer. Interacts (via cytoplasmic domain) with RACK1; promotes CLEC1B ubiquitination and proteasome-mediated degradation. Interacts (dimer) with SYK (via SH2 domains). Interacts with PDPN; the interaction is independent of CLEC1B glycosylation and activates CLEC1B. Glycosylated. Post-translationally, phosphorylated on tyrosine residue in response to rhodocytin binding. Expressed preferentially in the liver. Also expressed in immune cells of myeloid origin and on the surface of platelets.

The protein resides in the membrane. In terms of biological role, C-type lectin-like receptor that functions as a platelet receptor for the lymphatic endothelial marker, PDPN. After ligand activation, signals via sequential activation of SRC and SYK tyrosine kinases leading to activation of PLCG2. (Microbial infection) Acts as a receptor for the platelet-aggregating snake venom protein rhodocytin. Rhodocytin binding leads to tyrosine phosphorylation and this promotes the binding of spleen tyrosine kinase (SYK) and initiation of downstream tyrosine phosphorylation events and activation of PLCG2. Its function is as follows. (Microbial infection) Acts as an attachment factor for Human immunodeficiency virus type 1 (HIV-1) and facilitates its capture by platelets. The sequence is that of C-type lectin domain family 1 member B (CLEC1B) from Homo sapiens (Human).